A 235-amino-acid chain; its full sequence is Ribonuclease PH (235 aa).

Residues R86 and 124 to 126 (GTR) contribute to the phosphate site.

Belongs to the RNase PH family. Homohexameric ring arranged as a trimer of dimers.

The catalysed reaction is tRNA(n+1) + phosphate = tRNA(n) + a ribonucleoside 5'-diphosphate. In terms of biological role, phosphorolytic 3'-5' exoribonuclease that plays an important role in tRNA 3'-end maturation. Removes nucleotide residues following the 3'-CCA terminus of tRNAs; can also add nucleotides to the ends of RNA molecules by using nucleoside diphosphates as substrates, but this may not be physiologically important. Probably plays a role in initiation of 16S rRNA degradation (leading to ribosome degradation) during starvation. The protein is Ribonuclease PH of Francisella philomiragia subsp. philomiragia (strain ATCC 25017 / CCUG 19701 / FSC 153 / O#319-036).